Consider the following 280-residue polypeptide: Diaminopimelate epimerase (280 aa).

Substrate is bound by residues N13 and N66. Residue C75 is the Proton donor of the active site. Substrate-binding positions include 76 to 77 (GN), N165, N198, and 216 to 217 (ER). C225 (proton acceptor) is an active-site residue. 226–227 (GT) contributes to the substrate binding site.

Belongs to the diaminopimelate epimerase family. Homodimer.

It is found in the cytoplasm. It carries out the reaction (2S,6S)-2,6-diaminopimelate = meso-2,6-diaminopimelate. It functions in the pathway amino-acid biosynthesis; L-lysine biosynthesis via DAP pathway; DL-2,6-diaminopimelate from LL-2,6-diaminopimelate: step 1/1. Its function is as follows. Catalyzes the stereoinversion of LL-2,6-diaminopimelate (L,L-DAP) to meso-diaminopimelate (meso-DAP), a precursor of L-lysine and an essential component of the bacterial peptidoglycan. The sequence is that of Diaminopimelate epimerase from Cyanothece sp. (strain PCC 7425 / ATCC 29141).